The primary structure comprises 74 residues: DNA-directed RNA polymerase subunit omega (74 aa).

This sequence belongs to the RNA polymerase subunit omega family. The RNAP catalytic core consists of 2 alpha, 1 beta, 1 beta' and 1 omega subunit. When a sigma factor is associated with the core the holoenzyme is formed, which can initiate transcription.

The catalysed reaction is RNA(n) + a ribonucleoside 5'-triphosphate = RNA(n+1) + diphosphate. In terms of biological role, promotes RNA polymerase assembly. Latches the N- and C-terminal regions of the beta' subunit thereby facilitating its interaction with the beta and alpha subunits. The protein is DNA-directed RNA polymerase subunit omega of Lactobacillus acidophilus (strain ATCC 700396 / NCK56 / N2 / NCFM).